Here is a 417-residue protein sequence, read N- to C-terminus: Blood group Rh(D) polypeptide (417 aa).

Helical transmembrane passes span 12 to 32, 44 to 64, 77 to 97, 107 to 127, 130 to 150, 167 to 187, 203 to 223, 238 to 258, 287 to 307, 334 to 354, and 358 to 378; these read CLPL…YFFT, LVAS…GLGF, VAFN…LDGF, VITL…LISV, VLGK…VTAL, MNMM…AWCL, TIPS…WPSF, VFNT…GSSL, LIPS…ISVG, LLGL…TVGA, and MIGF…VIAL.

It belongs to the ammonium transporter (TC 2.A.49) family. Rh subfamily. Palmitoylated. As to expression, restricted to tissues or cell lines expressing erythroid characters.

The protein localises to the cell membrane. Functionally, may be part of an oligomeric complex which is likely to have a transport or channel function in the erythrocyte membrane. This is Blood group Rh(D) polypeptide (RHD) from Homo sapiens (Human).